The primary structure comprises 432 residues: Gamma-glutamyl phosphate reductase (432 aa).

This sequence belongs to the gamma-glutamyl phosphate reductase family.

Its subcellular location is the cytoplasm. The catalysed reaction is L-glutamate 5-semialdehyde + phosphate + NADP(+) = L-glutamyl 5-phosphate + NADPH + H(+). It functions in the pathway amino-acid biosynthesis; L-proline biosynthesis; L-glutamate 5-semialdehyde from L-glutamate: step 2/2. Its function is as follows. Catalyzes the NADPH-dependent reduction of L-glutamate 5-phosphate into L-glutamate 5-semialdehyde and phosphate. The product spontaneously undergoes cyclization to form 1-pyrroline-5-carboxylate. This Psychrobacter sp. (strain PRwf-1) protein is Gamma-glutamyl phosphate reductase.